Here is a 957-residue protein sequence, read N- to C-terminus: MSQSPSLHQLQELNPFLRRHLGPDATEQQAMLNALGIASRNELIEQTVPPDIRLNRPLDLPAALDEQAALAKLAGYAEQNQVWTSLIGMGYHGTITPTVILRNVLENPGWYTAYTPYQPEIAQGRLEALLNFQQMVIDLTGLPLANASLLDEATAAAEAMALAKRVARNKSNAFFADEHCHPQTLSVLKTRAEGFGFELIVDSVDNLAKHSVFGALLQYPDTHGEVRDLRPLIDQLHSQQALACVAADLLSLVVLAPPGELGADVVLGSTQRFGVPMGYGGPHAAYFACRDDYKRAMPGRIIGVSRDARGNTALRMALQTREQHIRREKANSNICTAQVLLANIAGFYAVYHGPEGLQRIAQRVHRLTFILAAGLEAKGIKRLNQHFFDTLTLNVGGAQAAIIESAEAAHINLRILGRGHLGVSLDETCTEQTVLRLLDIFLGVDHGLEITALDQLALPEGIPASLVRRTPFLAHPVFNLHHSETEMLRYLKQLENKDLALNQSMIPLGSCTMKLNATSEMIPITWPGFAQLHPFAPAAQAAGYKAMIDELESWLCAITGFDAICMQPNSGAQGEYAGLMAITRYHCSRHQPMRTLCLIPSSAHGTNPASAQMAGMEVVIVDCDNDGNVDLADLKAKAHAAGERLSCLMITYPSTHGVYEEGIREICDVVHQYGGQVYMDGANLNAQVGLARPADIGADVSHMNLHKTFCIPHGGGGPGMGPIGIRAHLKPFVASHPVVPVPGLDPNNSAVSAAPWGSASILPISWMYIAMMGPQLADASEVAILSANYLASQLGAAFPVLYRGRNQRVAHECILDLRPLKALTGISEEDVAKRLMDYGFHAPTMSFPVPGTLMVEPTESESKAELDRFVEAMLAIRAEIDEVQQGNWPAENNPLKHAPHTLADVLGVWDRPYSLEQAVAPSAHVRQHKYWPAVNRVDNVYGDRNLFCACVPVEAYR.

N6-(pyridoxal phosphate)lysine is present on Lys-707.

The protein belongs to the GcvP family. As to quaternary structure, the glycine cleavage system is composed of four proteins: P, T, L and H. The cofactor is pyridoxal 5'-phosphate.

The catalysed reaction is N(6)-[(R)-lipoyl]-L-lysyl-[glycine-cleavage complex H protein] + glycine + H(+) = N(6)-[(R)-S(8)-aminomethyldihydrolipoyl]-L-lysyl-[glycine-cleavage complex H protein] + CO2. Its function is as follows. The glycine cleavage system catalyzes the degradation of glycine. The P protein binds the alpha-amino group of glycine through its pyridoxal phosphate cofactor; CO(2) is released and the remaining methylamine moiety is then transferred to the lipoamide cofactor of the H protein. The chain is Glycine dehydrogenase (decarboxylating) 2 (gcvP2) from Pseudomonas putida (strain ATCC 47054 / DSM 6125 / CFBP 8728 / NCIMB 11950 / KT2440).